Here is a 37-residue protein sequence, read N- to C-terminus: Large ribosomal subunit protein bL36 (37 aa).

The protein belongs to the bacterial ribosomal protein bL36 family.

The sequence is that of Large ribosomal subunit protein bL36 from Idiomarina loihiensis (strain ATCC BAA-735 / DSM 15497 / L2-TR).